Here is a 343-residue protein sequence, read N- to C-terminus: Thioredoxin domain-containing protein 15 (343 aa).

The signal sequence occupies residues 1-20 (MQLLCWWQILLWVLGLPARG). The Extracellular segment spans residues 21-304 (LEEDSGHTWQ…GPLPSTLVKT (284 aa)). The segment covering 86–95 (EDQRSTEAHD) has biased composition (basic and acidic residues). Residues 86-112 (EDQRSTEAHDGTCSAQGDEDPRCGGRE) form a disordered region. The 118-residue stretch at 162-279 (ERNVTGLENF…LKIFIFNQTG (118 aa)) folds into the Thioredoxin domain. N-linked (GlcNAc...) asparagine glycans are attached at residues asparagine 170, asparagine 177, asparagine 189, and asparagine 276. The chain crosses the membrane as a helical span at residues 305–325 (VDWLLVFSLFFLISFIMYATI). Residues 326 to 343 (RTESIRWLIPGQEQEHAE) are Cytoplasmic-facing.

The protein resides in the cell projection. Its subcellular location is the cilium membrane. Its function is as follows. Acts as a positive regulator of ciliary hedgehog signaling. Required for cilia biogenesis. In Rattus norvegicus (Rat), this protein is Thioredoxin domain-containing protein 15 (Txndc15).